We begin with the raw amino-acid sequence, 86 residues long: Triple QxxK/R motif-containing protein (86 aa).

A helical transmembrane segment spans residues 51 to 71 (VGLMLAAILALLLAFYAFFYL).

Belongs to the TRIQK family.

The protein localises to the endoplasmic reticulum membrane. In terms of biological role, may play a role in cell growth and maintenance of cell morphology. In Rattus norvegicus (Rat), this protein is Triple QxxK/R motif-containing protein (Triqk).